Consider the following 230-residue polypeptide: 3,4-dihydroxy-2-butanone 4-phosphate synthase (230 aa).

D-ribulose 5-phosphate is bound by residues 38-39, D43, 151-155, and E175; these read RE and RRGHT. Position 39 (E39) interacts with Mg(2+). H154 provides a ligand contact to Mg(2+).

The protein belongs to the DHBP synthase family. As to quaternary structure, homodimer. Mg(2+) serves as cofactor. It depends on Mn(2+) as a cofactor.

The enzyme catalyses D-ribulose 5-phosphate = (2S)-2-hydroxy-3-oxobutyl phosphate + formate + H(+). It participates in cofactor biosynthesis; riboflavin biosynthesis; 2-hydroxy-3-oxobutyl phosphate from D-ribulose 5-phosphate: step 1/1. Catalyzes the conversion of D-ribulose 5-phosphate to formate and 3,4-dihydroxy-2-butanone 4-phosphate. The sequence is that of 3,4-dihydroxy-2-butanone 4-phosphate synthase from Vibrio harveyi (Beneckea harveyi).